The chain runs to 332 residues: Glycerol-3-phosphate dehydrogenase [NAD(P)+] (332 aa).

NADPH contacts are provided by S11, F12, K32, and K106. Residues K106, G137, and S139 each contribute to the sn-glycerol 3-phosphate site. Residue A141 coordinates NADPH. Positions 192, 245, 255, 256, and 257 each coordinate sn-glycerol 3-phosphate. The active-site Proton acceptor is the K192. R256 is a binding site for NADPH. Residues V280 and E282 each contribute to the NADPH site.

The protein belongs to the NAD-dependent glycerol-3-phosphate dehydrogenase family.

Its subcellular location is the cytoplasm. It carries out the reaction sn-glycerol 3-phosphate + NAD(+) = dihydroxyacetone phosphate + NADH + H(+). It catalyses the reaction sn-glycerol 3-phosphate + NADP(+) = dihydroxyacetone phosphate + NADPH + H(+). Its pathway is membrane lipid metabolism; glycerophospholipid metabolism. In terms of biological role, catalyzes the reduction of the glycolytic intermediate dihydroxyacetone phosphate (DHAP) to sn-glycerol 3-phosphate (G3P), the key precursor for phospholipid synthesis. The protein is Glycerol-3-phosphate dehydrogenase [NAD(P)+] of Staphylococcus epidermidis (strain ATCC 12228 / FDA PCI 1200).